Consider the following 213-residue polypeptide: Transcription antitermination protein NusB (213 aa).

It belongs to the NusB family.

Its function is as follows. Involved in transcription antitermination. Required for transcription of ribosomal RNA (rRNA) genes. Binds specifically to the boxA antiterminator sequence of the ribosomal RNA (rrn) operons. The polypeptide is Transcription antitermination protein NusB (Nostoc punctiforme (strain ATCC 29133 / PCC 73102)).